Reading from the N-terminus, the 172-residue chain is Shikimate kinase (172 aa).

G8–T15 is a binding site for ATP.

This sequence belongs to the shikimate kinase family.

It localises to the cytoplasm. The catalysed reaction is shikimate + ATP = 3-phosphoshikimate + ADP + H(+). It participates in metabolic intermediate biosynthesis; chorismate biosynthesis; chorismate from D-erythrose 4-phosphate and phosphoenolpyruvate: step 5/7. This chain is Shikimate kinase, found in Oleidesulfovibrio alaskensis (strain ATCC BAA-1058 / DSM 17464 / G20) (Desulfovibrio alaskensis).